The chain runs to 94 residues: Co-chaperonin GroES (94 aa).

It belongs to the GroES chaperonin family. Heptamer of 7 subunits arranged in a ring. Interacts with the chaperonin GroEL.

The protein localises to the cytoplasm. Functionally, together with the chaperonin GroEL, plays an essential role in assisting protein folding. The GroEL-GroES system forms a nano-cage that allows encapsulation of the non-native substrate proteins and provides a physical environment optimized to promote and accelerate protein folding. GroES binds to the apical surface of the GroEL ring, thereby capping the opening of the GroEL channel. In Staphylococcus aureus (strain Mu50 / ATCC 700699), this protein is Co-chaperonin GroES.